The primary structure comprises 65 residues: GRDAYIAQPENCVYECAQNSYCNDLCTKNGATSGYCQWLGKYGNACWCKDLPDNVPIRIPGKCHF.

One can recognise an LCN-type CS-alpha/beta domain in the interval 2–64 (RDAYIAQPEN…VPIRIPGKCH (63 aa)). 4 disulfides stabilise this stretch: cysteine 12–cysteine 63, cysteine 16–cysteine 36, cysteine 22–cysteine 46, and cysteine 26–cysteine 48. Phenylalanine 65 carries the post-translational modification Phenylalanine amide.

The protein belongs to the long (4 C-C) scorpion toxin superfamily. Sodium channel inhibitor family. Alpha subfamily. In terms of tissue distribution, expressed by the venom gland.

It localises to the secreted. Alpha toxins bind voltage-independently at site-3 of sodium channels (Nav) and inhibit the inactivation of the activated channels, thereby blocking neuronal transmission. The sequence is that of Alpha-toxin Bot1 from Buthus occitanus tunetanus (Common European scorpion).